The following is a 402-amino-acid chain: Nodulation protein E (402 aa).

A Ketosynthase family 3 (KS3) domain is found at 2-401; sequence DRRVVITGIG…GMNAVLAFRQ (400 aa). Residues C162, H294, and H331 each act as for beta-ketoacyl synthase activity in the active site. Residues 329–348 form a helical membrane-spanning segment; the sequence is HAHCLGAASALEMIACVMAI.

This sequence belongs to the thiolase-like superfamily. Beta-ketoacyl-ACP synthases family.

The protein resides in the cell inner membrane. Functionally, proposed to synthesize NOD factor fatty acyl chain. Involved in the synthesis of a highly unsaturated fatty acid moiety, which forms part of a lipo-oligosaccharide that is responsible for host specificity. In Rhizobium sp. (strain N33), this protein is Nodulation protein E (nodE).